The primary structure comprises 297 residues: MKHFLEISQLSSEQIESLLQRALYFKHTKQYPSYSQSIIANLFYENSTRTRISFELAERHLAMSVVNLDLQTSSETKGEAIEDTIRTLAAMGIQYFVIRHKQDGLQQNLANKLGDTVNIINAGDGTHAHPSQAILDMVTIIEQKKRLDKLKIAILGNIKHSRVANSFQCICSKLGVGELVLISPEIWQPSQVHFGRVTDNLNEGLEGADVVICLRVQKERLLQDDHLDLDFYRNNFALTQKSLSYAKPDAMVMHPGPMNRGVEIDSEVADGNQSCILQQVTNGVYARMAILESLIAS.

Positions 49 and 50 each coordinate carbamoyl phosphate. K77 contributes to the L-aspartate binding site. R99, H129, and Q132 together coordinate carbamoyl phosphate. L-aspartate-binding residues include R162 and R215. 2 residues coordinate carbamoyl phosphate: G256 and P257.

Belongs to the aspartate/ornithine carbamoyltransferase superfamily. ATCase family. In terms of assembly, heterododecamer (2C3:3R2) of six catalytic PyrB chains organized as two trimers (C3), and six regulatory PyrI chains organized as three dimers (R2).

The catalysed reaction is carbamoyl phosphate + L-aspartate = N-carbamoyl-L-aspartate + phosphate + H(+). It functions in the pathway pyrimidine metabolism; UMP biosynthesis via de novo pathway; (S)-dihydroorotate from bicarbonate: step 2/3. In terms of biological role, catalyzes the condensation of carbamoyl phosphate and aspartate to form carbamoyl aspartate and inorganic phosphate, the committed step in the de novo pyrimidine nucleotide biosynthesis pathway. The chain is Aspartate carbamoyltransferase catalytic subunit from Legionella pneumophila subsp. pneumophila (strain Philadelphia 1 / ATCC 33152 / DSM 7513).